Consider the following 78-residue polypeptide: Translational regulator CsrA (78 aa).

This sequence belongs to the CsrA/RsmA family. In terms of assembly, homodimer; the beta-strands of each monomer intercalate to form a hydrophobic core, while the alpha-helices form wings that extend away from the core.

The protein resides in the cytoplasm. Its function is as follows. A translational regulator that binds mRNA to regulate translation initiation and/or mRNA stability. Usually binds in the 5'-UTR at or near the Shine-Dalgarno sequence preventing ribosome-binding, thus repressing translation. Its main target seems to be the major flagellin gene, while its function is anatagonized by FliW. The protein is Translational regulator CsrA of Desulfotalea psychrophila (strain LSv54 / DSM 12343).